We begin with the raw amino-acid sequence, 178 residues long: Adenine phosphoribosyltransferase (178 aa).

Belongs to the purine/pyrimidine phosphoribosyltransferase family. As to quaternary structure, homodimer.

It localises to the cytoplasm. The enzyme catalyses AMP + diphosphate = 5-phospho-alpha-D-ribose 1-diphosphate + adenine. Its pathway is purine metabolism; AMP biosynthesis via salvage pathway; AMP from adenine: step 1/1. Its function is as follows. Catalyzes a salvage reaction resulting in the formation of AMP, that is energically less costly than de novo synthesis. The sequence is that of Adenine phosphoribosyltransferase from Novosphingobium aromaticivorans (strain ATCC 700278 / DSM 12444 / CCUG 56034 / CIP 105152 / NBRC 16084 / F199).